A 2009-amino-acid chain; its full sequence is Protein Daple (2009 aa).

The Calponin-homology (CH) domain maps to 11–131; that stretch reads LFLQSPLVTW…KVLLLVLGCA (121 aa). The tract at residues 221–251 is disordered; that stretch reads QTQQPPSPGKFSSPDSTPSPTSSLSSEDKQH. Phosphoserine is present on residues Ser227 and Ser239. Residues 232 to 245 are compositionally biased toward low complexity; sequence SSPDSTPSPTSSLS. Coiled coils occupy residues 247–425 and 456–1008; these read EDKQ…QKQS and ELNE…TQEG. Ser486 is modified (phosphoserine). Residues 1002–1036 are disordered; that stretch reads LRQTQEGGDKAQNALKRPPGKVTSHQEKEAWEPSH. A compositionally biased stretch (basic and acidic residues) spans 1025 to 1036; the sequence is SHQEKEAWEPSH. Positions 1190 to 1384 form a coiled coil; it reads HRNLELEHKE…LEEKIMDQYK (195 aa). Basic and acidic residues predominate over residues 1410–1419; it reads KEGSRERLKS. 2 disordered regions span residues 1410–1716 and 1757–1787; these read KEGS…GAKM and GMPS…HMPV. The segment covering 1430–1439 has biased composition (low complexity); sequence PSDPASPSPS. Ser1435 carries the phosphoserine modification. A compositionally biased stretch (polar residues) spans 1440–1449; the sequence is QALRSQTENP. Composition is skewed to low complexity over residues 1510-1524 and 1562-1581; these read TFST…SSST and NSLE…SLKG. A Phosphoserine modification is found at Ser1592. The GBA signature appears at 1652 to 1683; it reads HSASPSSEMVTLEEFLEESNRGGSPTHDTPSC. Positions 1681–1697 are enriched in basic and acidic residues; that stretch reads PSCRDDLLSDYFRKAHD. The segment covering 1761–1783 has biased composition (polar residues); sequence RQVQPPQSLSLGRPRQTTMTQNC. Phosphoserine is present on Ser1798. A disordered region spans residues 1808-2009; that stretch reads SGPEACRPES…QTVWYEYGCV (202 aa). The segment covering 1866-1883 has biased composition (basic and acidic residues); sequence RPLDTRRFSLAPPKEERL. Polar residues predominate over residues 1898–1911; the sequence is GCSSGSNPQIQHFS. A compositionally biased stretch (gly residues) spans 1943-1954; it reads TSEGDGGPGHGY. The span at 1981 to 1991 shows a compositional bias: polar residues; it reads SQGSSSKSTPA. Residues 2006 to 2009 carry the PDZ-binding motif; it reads YGCV. A DVL1-binding region spans residues 2007 to 2009; the sequence is GCV.

This sequence belongs to the CCDC88 family. Homooligomer. Interacts with DVL1 (via PDZ domain); dissociates following initiation of non-canonical Wnt signaling. Interacts (via C-terminus) with ligand-activated Wnt receptor FZD7; competes with DVL1 for binding to FZD7 and displaces DVL1 from ligand-activated FZD7. Interacts (via GBA motif) with guanine nucleotide-binding protein G(i) alpha subunits GNAI1, GNAI2 and GNAI3 (inactive GDP-bound form); interacts with higher affinity with GNAI1 and GNAI3 than with GNAI2 and interaction leads to G(i) alpha subunit activation. Does not interact with GNAO1.

It localises to the cytoplasm. Its subcellular location is the cell junction. Functionally, required for activation of guanine nucleotide-binding proteins (G-proteins) during non-canonical Wnt signaling. Binds to ligand-activated Wnt receptor FZD7, displacing DVL1 from the FZD7 receptor and leading to inhibition of canonical Wnt signaling. Acts as a non-receptor guanine nucleotide exchange factor by also binding to guanine nucleotide-binding protein G(i) alpha (Gi-alpha) subunits, leading to their activation. Binding to Gi-alpha subunits displaces the beta and gamma subunits from the heterotrimeric G-protein complex, triggering non-canonical Wnt responses such as activation of RAC1 and PI3K-AKT signaling. Promotes apical constriction of cells via ARHGEF18. The polypeptide is Protein Daple (Ccdc88c) (Mus musculus (Mouse)).